Consider the following 414-residue polypeptide: Protein MAK11 (414 aa).

Ser-2 is subject to N-acetylserine. 6 WD repeats span residues 50–78 (AHSL…RIYD), 90–135 (SHQG…MVWR), 147–177 (GHTA…RLWN), 189–221 (LRKY…LIYE), 238–267 (LMHI…HFYP), and 298–330 (GHTN…VVWD). Ser-376 and Ser-380 each carry phosphoserine. Thr-382 bears the Phosphothreonine mark.

Associates with 60S pre-ribosomal particles.

The protein localises to the nucleus. Its subcellular location is the nucleolus. It is found in the nucleus membrane. Functionally, essential for cell growth. Plays a role in assembly of 60S pre-ribosomal particles in the nucleolus. Also required for replication of the M1 double-stranded RNA of the L-A virus. This latter function may reflect an enhanced requirement for free 60S ribosomal particles for the translation of viral mRNAs which lack poly-A tails. The polypeptide is Protein MAK11 (MAK11) (Saccharomyces cerevisiae (strain ATCC 204508 / S288c) (Baker's yeast)).